We begin with the raw amino-acid sequence, 72 residues long: Large ribosomal subunit protein bL32 (72 aa).

Belongs to the bacterial ribosomal protein bL32 family.

This chain is Large ribosomal subunit protein bL32, found in Dehalococcoides mccartyi (strain ATCC BAA-2266 / KCTC 15142 / 195) (Dehalococcoides ethenogenes (strain 195)).